A 3416-amino-acid chain; its full sequence is Genome polyprotein (3416 aa).

Positions methionine 1–proline 34 are disordered. Over methionine 1 to threonine 99 the chain is Cytoplasmic. Residues arginine 97 to serine 117 constitute a propeptide, ER anchor for the capsid protein C, removed in mature form by serine protease NS3. Residues threonine 100–isoleucine 120 traverse the membrane as a helical segment. Over arginine 121–tryptophan 243 the chain is Extracellular. An N-linked (GlcNAc...) asparagine; by host glycan is attached at asparagine 145. The chain crosses the membrane as a helical span at residues lysine 244 to aspartate 261. A topological domain (cytoplasmic) is located at residue serine 262. Residues leucine 263–alanine 281 form a helical membrane-spanning segment. The Extracellular portion of the chain corresponds to threonine 282–threonine 728. Intrachain disulfides connect cysteine 284–cysteine 311, cysteine 341–cysteine 397, cysteine 341–cysteine 402, cysteine 355–cysteine 386, cysteine 373–cysteine 397, and cysteine 373–cysteine 402. A fusion peptide region spans residues aspartate 379–glycine 392. An N-linked (GlcNAc...) asparagine; by host glycan is attached at asparagine 435. Disulfide bonds link cysteine 467/cysteine 571 and cysteine 588/cysteine 619. Residues isoleucine 729–glycine 749 traverse the membrane as a helical segment. Residues leucine 750–threonine 756 are Cytoplasmic-facing. The helical transmembrane segment at leucine 757–alanine 777 threads the bilayer. At aspartate 778–alanine 1134 the chain is on the extracellular side. 6 disulfides stabilise this stretch: cysteine 781-cysteine 792, cysteine 832-cysteine 922, cysteine 957-cysteine 1002, cysteine 1059-cysteine 1108, cysteine 1070-cysteine 1092, and cysteine 1091-cysteine 1095. N-linked (GlcNAc...) asparagine; by host glycans are attached at residues asparagine 862, asparagine 985, and asparagine 1001. A helical transmembrane segment spans residues methionine 1135–isoleucine 1155. Residues arginine 1156–glycine 1162 lie on the Cytoplasmic side of the membrane. The chain crosses the membrane as a helical span at residues threonine 1163–isoleucine 1183. The Lumenal segment spans residues glutamate 1184–tyrosine 1189. Residues valine 1190–leucine 1210 traverse the membrane as a helical segment. Topologically, residues leucine 1211–glutamate 1235 are cytoplasmic. The chain crosses the membrane as a helical span at residues alanine 1236 to serine 1256. At asparagine 1257–aspartate 1295 the chain is on the lumenal side. A helical transmembrane segment spans residues methionine 1296 to tryptophan 1316. Residues serine 1317–serine 1361 are Cytoplasmic-facing. The chain crosses the membrane as a helical span at residues phenylalanine 1362–methionine 1379. The Lumenal portion of the chain corresponds to valine 1380–serine 1384. A helical transmembrane segment spans residues glutamine 1385–threonine 1405. At arginine 1406–tryptophan 1458 the chain is on the cytoplasmic side. The interval alanine 1412–glutamate 1451 is interacts with and activates NS3 protease. Positions leucine 1459–isoleucine 1479 form an intramembrane region, helical. The Cytoplasmic portion of the chain corresponds to tryptophan 1480–alanine 2162. Residues serine 1492–proline 1671 form the Peptidase S7 domain. Residues histidine 1545, aspartate 1569, and serine 1629 each act as charge relay system; for serine protease NS3 activity in the active site. A Helicase ATP-binding domain is found at threonine 1677–glutamate 1833. Methionine 1690–threonine 1697 lines the ATP pocket. The DEAH box signature appears at aspartate 1781 to histidine 1784. The region spanning glycine 1844–tyrosine 2002 is the Helicase C-terminal domain. Lysine 1885 bears the N6-acetyllysine; by host mark. A helical transmembrane segment spans residues phenylalanine 2163–phenylalanine 2183. Over valine 2184–arginine 2191 the chain is Lumenal. The helical intramembrane region spans methionine 2192 to valine 2211. Residue aspartate 2212 is a topological domain, lumenal. Residues tyrosine 2213–glutamate 2233 form a helical membrane-spanning segment. Residues proline 2234 to alanine 2246 lie on the Cytoplasmic side of the membrane. The helical transmembrane segment at tyrosine 2247–leucine 2267 threads the bilayer. Residues aspartate 2268–serine 2301 lie on the Lumenal side of the membrane. Positions tryptophan 2302–threonine 2322 form an intramembrane region, helical. Residues lysine 2323 to glycine 2345 are Lumenal-facing. Residues threonine 2346–alanine 2366 constitute an intramembrane region (helical). The Lumenal portion of the chain corresponds to threonine 2367–proline 2368. A helical transmembrane segment spans residues leucine 2369 to leucine 2389. The Cytoplasmic segment spans residues glutamate 2390–arginine 2432. A helical membrane pass occupies residues methionine 2433–alanine 2453. The Lumenal segment spans residues serine 2454 to threonine 2476. Residues leucine 2477–leucine 2497 traverse the membrane as a helical segment. The Cytoplasmic segment spans residues leucine 2498–isoleucine 3416. The mRNA cap 0-1 NS5-type MT domain maps to glycine 2514–cysteine 2778. Serine 2569 is a binding site for S-adenosyl-L-methionine. The residue at position 2569 (serine 2569) is a Phosphoserine. Lysine 2574 acts as the For 2'-O-MTase activity in catalysis. S-adenosyl-L-methionine-binding residues include glycine 2599, tryptophan 2600, threonine 2617, isoleucine 2618, aspartate 2644, and valine 2645. Aspartate 2659 functions as the For 2'-O-MTase activity in the catalytic mechanism. An S-adenosyl-L-methionine-binding site is contributed by isoleucine 2660. Catalysis depends on for 2'-O-MTase activity residues lysine 2696 and glutamate 2732. The interaction with host SCRIB stretch occupies residues glutamate 2732–serine 2736. Residue tyrosine 2734 coordinates S-adenosyl-L-methionine. Zn(2+)-binding residues include glutamate 2952, histidine 2956, cysteine 2961, and cysteine 2964. Residues glycine 3042–alanine 3191 enclose the RdRp catalytic domain. Residues histidine 3226, cysteine 3242, and cysteine 3361 each contribute to the Zn(2+) site.

It in the N-terminal section; belongs to the class I-like SAM-binding methyltransferase superfamily. mRNA cap 0-1 NS5-type methyltransferase family. Homodimer. Interacts (via N-terminus) with host EXOC1 (via C-terminus); this interaction results in EXOC1 degradation through the proteasome degradation pathway. In terms of assembly, forms heterodimers with envelope protein E in the endoplasmic reticulum and Golgi. As to quaternary structure, homodimer; in the endoplasmic reticulum and Golgi. Interacts with protein prM. Interacts with non-structural protein 1. Homodimer; Homohexamer when secreted. Interacts with envelope protein E. In terms of assembly, interacts (via N-terminus) with serine protease NS3. As to quaternary structure, forms a heterodimer with serine protease NS3. May form homooligomers. Forms a heterodimer with NS2B. Interacts with NS4B. Interacts with unphosphorylated RNA-directed RNA polymerase NS5; this interaction stimulates RNA-directed RNA polymerase NS5 guanylyltransferase activity. In terms of assembly, interacts with serine protease NS3. As to quaternary structure, homodimer. Interacts with host STAT2; this interaction inhibits the phosphorylation of the latter, and, when all viral proteins are present (polyprotein), targets STAT2 for degradation. Interacts with serine protease NS3. In terms of processing, specific enzymatic cleavages in vivo yield mature proteins. Cleavages in the lumen of endoplasmic reticulum are performed by host signal peptidase, whereas cleavages in the cytoplasmic side are performed by serine protease NS3. Signal cleavage at the 2K-4B site requires a prior NS3 protease-mediated cleavage at the 4A-2K site. Post-translationally, cleaved in post-Golgi vesicles by a host furin, releasing the mature small envelope protein M, and peptide pr. This cleavage is incomplete as up to 30% of viral particles still carry uncleaved prM. N-glycosylated. In terms of processing, N-glycosylated. The excreted form is glycosylated and this is required for efficient secretion of the protein from infected cells. Post-translationally, acetylated by host KAT5. Acetylation modulates NS3 RNA-binding and unwinding activities and plays an important positive role for viral replication. Phosphorylated on serines residues. This phosphorylation may trigger NS5 nuclear localization.

It is found in the virion. The protein resides in the host nucleus. It localises to the host cytoplasm. The protein localises to the host perinuclear region. Its subcellular location is the secreted. It is found in the virion membrane. The protein resides in the host endoplasmic reticulum membrane. It catalyses the reaction Selective hydrolysis of -Xaa-Xaa-|-Yaa- bonds in which each of the Xaa can be either Arg or Lys and Yaa can be either Ser or Ala.. The enzyme catalyses RNA(n) + a ribonucleoside 5'-triphosphate = RNA(n+1) + diphosphate. It carries out the reaction a ribonucleoside 5'-triphosphate + H2O = a ribonucleoside 5'-diphosphate + phosphate + H(+). The catalysed reaction is ATP + H2O = ADP + phosphate + H(+). It catalyses the reaction a 5'-end (5'-triphosphoguanosine)-ribonucleoside in mRNA + S-adenosyl-L-methionine = a 5'-end (N(7)-methyl 5'-triphosphoguanosine)-ribonucleoside in mRNA + S-adenosyl-L-homocysteine. The enzyme catalyses a 5'-end (N(7)-methyl 5'-triphosphoguanosine)-ribonucleoside in mRNA + S-adenosyl-L-methionine = a 5'-end (N(7)-methyl 5'-triphosphoguanosine)-(2'-O-methyl-ribonucleoside) in mRNA + S-adenosyl-L-homocysteine + H(+). Functionally, plays a role in virus budding by binding to the cell membrane and gathering the viral RNA into a nucleocapsid that forms the core of a mature virus particle. During virus entry, may induce genome penetration into the host cytoplasm after hemifusion induced by the surface proteins. Can migrate to the cell nucleus where it modulates host functions. Inhibits RNA silencing by interfering with host Dicer. Its function is as follows. Prevents premature fusion activity of envelope proteins in trans-Golgi by binding to envelope protein E at pH6.0. After virion release in extracellular space, gets dissociated from E dimers. In terms of biological role, acts as a chaperone for envelope protein E during intracellular virion assembly by masking and inactivating envelope protein E fusion peptide. prM is the only viral peptide matured by host furin in the trans-Golgi network probably to avoid catastrophic activation of the viral fusion activity in acidic Golgi compartment prior to virion release. prM-E cleavage is inefficient, and many virions are only partially matured. These uncleaved prM would play a role in immune evasion. Functionally, may play a role in virus budding. Exerts cytotoxic effects by activating a mitochondrial apoptotic pathway through M ectodomain. May display a viroporin activity. Binds to host cell surface receptor and mediates fusion between viral and cellular membranes. Envelope protein is synthesized in the endoplasmic reticulum in the form of heterodimer with protein prM. They play a role in virion budding in the ER, and the newly formed immature particle is covered with 60 spikes composed of heterodimer between precursor prM and envelope protein E. The virion is transported to the Golgi apparatus where the low pH causes dissociation of PrM-E heterodimers and formation of E homodimers. prM-E cleavage is inefficient, and many virions are only partially matured. These uncleaved prM would play a role in immune evasion. Its function is as follows. Involved in immune evasion, pathogenesis and viral replication. Once cleaved off the polyprotein, is targeted to three destinations: the viral replication cycle, the plasma membrane and the extracellular compartment. Essential for viral replication. Required for formation of the replication complex and recruitment of other non-structural proteins to the ER-derived membrane structures. Excreted as a hexameric lipoparticle that plays a role against host immune response. Antagonizing the complement function. Binds to the host macrophages and dendritic cells. Inhibits signal transduction originating from Toll-like receptor 3 (TLR3). In terms of biological role, component of the viral RNA replication complex that functions in virion assembly and antagonizes the host immune response. Functionally, required cofactor for the serine protease function of NS3. May have membrane-destabilizing activity and form viroporins. Displays three enzymatic activities: serine protease, NTPase and RNA helicase. NS3 serine protease, in association with NS2B, performs its autocleavage and cleaves the polyprotein at dibasic sites in the cytoplasm: C-prM, NS2A-NS2B, NS2B-NS3, NS3-NS4A, NS4A-2K and NS4B-NS5. NS3 RNA helicase binds RNA and unwinds dsRNA in the 3' to 5' direction. Its function is as follows. Regulates the ATPase activity of the NS3 helicase activity. NS4A allows NS3 helicase to conserve energy during unwinding. In terms of biological role, functions as a signal peptide for NS4B and is required for the interferon antagonism activity of the latter. Functionally, induces the formation of ER-derived membrane vesicles where the viral replication takes place. Inhibits interferon (IFN)-induced host STAT1 phosphorylation and nuclear translocation, thereby preventing the establishment of cellular antiviral state by blocking the IFN-alpha/beta pathway. Inhibits STAT2 translocation in the nucleus after IFN-alpha treatment. Replicates the viral (+) and (-) RNA genome, and performs the capping of genomes in the cytoplasm. NS5 methylates viral RNA cap at guanine N-7 and ribose 2'-O positions. Besides its role in RNA genome replication, also prevents the establishment of cellular antiviral state by blocking the interferon-alpha/beta (IFN-alpha/beta) signaling pathway. Inhibits host TYK2 and STAT2 phosphorylation, thereby preventing activation of JAK-STAT signaling pathway. The chain is Genome polyprotein from Homo sapiens (Human).